Consider the following 244-residue polypeptide: 5-oxoprolinase subunit A (244 aa).

It belongs to the LamB/PxpA family. In terms of assembly, forms a complex composed of PxpA, PxpB and PxpC.

It carries out the reaction 5-oxo-L-proline + ATP + 2 H2O = L-glutamate + ADP + phosphate + H(+). Catalyzes the cleavage of 5-oxoproline to form L-glutamate coupled to the hydrolysis of ATP to ADP and inorganic phosphate. The chain is 5-oxoprolinase subunit A from Salmonella dublin (strain CT_02021853).